The chain runs to 206 residues: 2-phospho-L-lactate guanylyltransferase (206 aa).

Belongs to the CofC family. As to quaternary structure, homodimer.

The catalysed reaction is (2S)-2-phospholactate + GTP + H(+) = (2S)-lactyl-2-diphospho-5'-guanosine + diphosphate. The protein operates within cofactor biosynthesis; coenzyme F420 biosynthesis. Guanylyltransferase that catalyzes the activation of (2S)-2-phospholactate (2-PL) as (2S)-lactyl-2-diphospho-5'-guanosine, via the condensation of 2-PL with GTP. It is involved in the biosynthesis of coenzyme F420, a hydride carrier cofactor. This chain is 2-phospho-L-lactate guanylyltransferase, found in Archaeoglobus fulgidus (strain ATCC 49558 / DSM 4304 / JCM 9628 / NBRC 100126 / VC-16).